The following is a 663-amino-acid chain: Rho GTPase-activating protein 18 (663 aa).

The tract at residues 15–37 is disordered; that stretch reads YHPSGKDQTVGNSHAKAGEEATS. Ser-66 and Ser-69 each carry phosphoserine. Residue Thr-158 is modified to Phosphothreonine. Disordered regions lie at residues 179–227 and 243–277; these read RESK…PAPE and QKES…TRIG. Basic and acidic residues-rich tracts occupy residues 197-219 and 245-258; these read NENK…KLIP and ESSK…KGDD. Ser-263 carries the post-translational modification Phosphoserine. Positions 324-523 constitute a Rho-GAP domain; sequence VPLTALLEQD…LLIKYQKLLW (200 aa). Phosphoserine is present on Ser-610.

Interacts with MPHOSPH6.

Its subcellular location is the cytoplasm. In terms of biological role, rho GTPase activating protein that suppresses F-actin polymerization by inhibiting Rho. Rho GTPase activating proteins act by converting Rho-type GTPases to an inactive GDP-bound state. Plays a key role in tissue tension and 3D tissue shape by regulating cortical actomyosin network formation. Acts downstream of YAP1 and inhibits actin polymerization, which in turn reduces nuclear localization of YAP1. Regulates cell shape, spreading, and migration. This is Rho GTPase-activating protein 18 from Homo sapiens (Human).